A 188-amino-acid polypeptide reads, in one-letter code: Josephin-2 (188 aa).

One can recognise a Josephin domain in the interval 11–188 (PPSVYHERQR…EEAGCWLNTS (178 aa)). The active-site Nucleophile is the Cys-24. The active-site Proton acceptor is His-125.

It is found in the cytoplasm. Its subcellular location is the cytosol. It carries out the reaction Thiol-dependent hydrolysis of ester, thioester, amide, peptide and isopeptide bonds formed by the C-terminal Gly of ubiquitin (a 76-residue protein attached to proteins as an intracellular targeting signal).. Its function is as follows. Cleaves 'Lys-63'-linked poly-ubiquitin chains, and with lesser efficiency 'Lys-48'-linked poly-ubiquitin chains (in vitro). May act as a deubiquitinating enzyme. This chain is Josephin-2 (Josd2), found in Mus musculus (Mouse).